Consider the following 93-residue polypeptide: Small ribosomal subunit protein bS20c (93 aa).

It belongs to the bacterial ribosomal protein bS20 family.

The protein resides in the plastid. It localises to the chloroplast. Its function is as follows. Binds directly to 16S ribosomal RNA. This chain is Small ribosomal subunit protein bS20c, found in Phaeodactylum tricornutum (strain CCAP 1055/1).